The primary structure comprises 601 residues: Elongation factor 4 (601 aa).

A tr-type G domain is found at 6-188 (EHIRNFSIIA…EIVRKIPAPE (183 aa)). Residues 18–23 (DHGKST) and 135–138 (NKID) each bind GTP.

Belongs to the TRAFAC class translation factor GTPase superfamily. Classic translation factor GTPase family. LepA subfamily.

It is found in the cell inner membrane. It carries out the reaction GTP + H2O = GDP + phosphate + H(+). Its function is as follows. Required for accurate and efficient protein synthesis under certain stress conditions. May act as a fidelity factor of the translation reaction, by catalyzing a one-codon backward translocation of tRNAs on improperly translocated ribosomes. Back-translocation proceeds from a post-translocation (POST) complex to a pre-translocation (PRE) complex, thus giving elongation factor G a second chance to translocate the tRNAs correctly. Binds to ribosomes in a GTP-dependent manner. This Hydrogenovibrio crunogenus (strain DSM 25203 / XCL-2) (Thiomicrospira crunogena) protein is Elongation factor 4.